The primary structure comprises 210 residues: Probable GTP-binding protein EngB (210 aa).

In terms of domain architecture, EngB-type G spans 29–203 (NGIEIAFAGR…SNKLDSWFAP (175 aa)). GTP contacts are provided by residues 37 to 44 (GRSNAGKS), 64 to 68 (GRTQL), 82 to 85 (DLPG), 149 to 152 (TKAD), and 181 to 184 (IYSA). Residues Ser44 and Thr66 each coordinate Mg(2+).

The protein belongs to the TRAFAC class TrmE-Era-EngA-EngB-Septin-like GTPase superfamily. EngB GTPase family. Requires Mg(2+) as cofactor.

In terms of biological role, necessary for normal cell division and for the maintenance of normal septation. The polypeptide is Probable GTP-binding protein EngB (Haemophilus ducreyi (strain 35000HP / ATCC 700724)).